A 210-amino-acid chain; its full sequence is 3-hexulose-6-phosphate synthase (210 aa).

It belongs to the HPS/KGPDC family. HPS subfamily.

The catalysed reaction is D-ribulose 5-phosphate + formaldehyde = D-arabino-hex-3-ulose 6-phosphate. It functions in the pathway one-carbon metabolism; formaldehyde assimilation via RuMP pathway; D-fructose 6-phosphate from D-ribulose 5-phosphate and formaldehyde: step 1/2. Functionally, catalyzes the condensation of ribulose 5-phosphate with formaldehyde to form 3-hexulose 6-phosphate. This chain is 3-hexulose-6-phosphate synthase, found in Staphylococcus epidermidis (strain ATCC 12228 / FDA PCI 1200).